The sequence spans 230 residues: Ureidoacrylate amidohydrolase RutB (230 aa).

The active-site Proton acceptor is Asp24. Residue Lys133 is part of the active site. The Nucleophile role is filled by Cys166.

The protein belongs to the isochorismatase family. RutB subfamily.

It catalyses the reaction (Z)-3-ureidoacrylate + H2O + H(+) = (Z)-3-aminoacrylate + NH4(+) + CO2. The catalysed reaction is (Z)-3-ureidoacrylate + H2O = (Z)-3-aminoacrylate + carbamate + H(+). The enzyme catalyses (Z)-2-methylureidoacrylate + H2O + H(+) = (Z)-2-methylaminoacrylate + NH4(+) + CO2. Hydrolyzes ureidoacrylate to form aminoacrylate and carbamate. The carbamate hydrolyzes spontaneously, thereby releasing one of the nitrogen atoms of the pyrimidine ring as ammonia and one of its carbon atoms as CO2. The chain is Ureidoacrylate amidohydrolase RutB from Escherichia coli O103:H2 (strain 12009 / EHEC).